The following is a 676-amino-acid chain: Lon-like protease BrxL (676 aa).

It belongs to the BrxL family.

BREX systems (bacteriophage exclusion) provide immunity against bacteriophage. Part of a type 1 BREX system. This system allows phage adsorption but prevents phage DNA replication, without degradation of the phage DNA. Methylation of bacterial DNA by PglX probably guides self/non-self discrimination. When the brxA-brxB-brxC-pglX and pglZ-brxL operons are transformed into a susceptible B.subtilis strain (BEST7003) they confer resistance to bacteriophages SPbeta, SP16, Zeta, phi3T and SP02 and partial protection to phages SP01 and SP82G (these include lytic and temperate phage). They do not protect against phages phi105, rho10 or rho14. Additionally confers a very slight reduction in efficiency of plasmid transformation. The polypeptide is Lon-like protease BrxL (Bacillus cereus (strain H3081.97)).